The primary structure comprises 68 residues: uncharacterized protein (68 aa).

A signal peptide spans 1–28 (MNKEQSADDPSVDLIRVKNMLNSTISMS).

This is an uncharacterized protein from Escherichia coli (strain K12).